Reading from the N-terminus, the 489-residue chain is L-arabinose isomerase (489 aa).

Positions 300, 325, 342, and 441 each coordinate Mn(2+).

This sequence belongs to the arabinose isomerase family. Requires Mn(2+) as cofactor.

It carries out the reaction beta-L-arabinopyranose = L-ribulose. Its pathway is carbohydrate degradation; L-arabinose degradation via L-ribulose; D-xylulose 5-phosphate from L-arabinose (bacterial route): step 1/3. Its function is as follows. Catalyzes the conversion of L-arabinose to L-ribulose. This chain is L-arabinose isomerase, found in Clostridium beijerinckii (strain ATCC 51743 / NCIMB 8052) (Clostridium acetobutylicum).